The sequence spans 256 residues: MQIIPAIDLLGGSCVRLHQGDYDKVTRFSDDPVAQALQWQEQGAERLHLVDLDGARTGEPANDSAIRAITSALTIPVQLGGGVRTAERADTLLACGLDRVILGTVALEQPQLVVELADRHPGRVVVGIDARHGKVATKGWIEDSNTEATALAQRFSASAIAAIISTDISTDGTLEGPNLQALREMAEASSVPVIASGGVGCMGDLLALLTLEPLGVEAVIVGRALYDGRIDLGEARKALAESRLQDPPSDLLQDFA.

D8 functions as the Proton acceptor in the catalytic mechanism. The active-site Proton donor is the D129.

It belongs to the HisA/HisF family.

It localises to the cytoplasm. It carries out the reaction 1-(5-phospho-beta-D-ribosyl)-5-[(5-phospho-beta-D-ribosylamino)methylideneamino]imidazole-4-carboxamide = 5-[(5-phospho-1-deoxy-D-ribulos-1-ylimino)methylamino]-1-(5-phospho-beta-D-ribosyl)imidazole-4-carboxamide. The protein operates within amino-acid biosynthesis; L-histidine biosynthesis; L-histidine from 5-phospho-alpha-D-ribose 1-diphosphate: step 4/9. This Synechococcus sp. (strain WH7803) protein is 1-(5-phosphoribosyl)-5-[(5-phosphoribosylamino)methylideneamino] imidazole-4-carboxamide isomerase.